The following is a 1018-amino-acid chain: Contactin-1 (1018 aa).

A signal peptide spans methionine 1–alanine 20. 6 consecutive Ig-like C2-type domains span residues proline 41–serine 131, proline 137–phenylalanine 223, proline 241–tyrosine 326, proline 331–lysine 407, proline 413–valine 500, and proline 504–arginine 601. 2 disulfide bridges follow: cysteine 65–cysteine 114 and cysteine 158–cysteine 211. 2 N-linked (GlcNAc...) asparagine glycosylation sites follow: asparagine 208 and asparagine 258. Cysteine 263 and cysteine 310 form a disulfide bridge. N-linked (GlcNAc...) asparagine glycosylation is present at asparagine 338. 2 disulfide bridges follow: cysteine 352/cysteine 391 and cysteine 436/cysteine 484. Asparagine 457 and asparagine 473 each carry an N-linked (GlcNAc...) asparagine glycan. Asparagine 494 carries an N-linked (GlcNAc...) (complex) asparagine glycan. Residue asparagine 521 is glycosylated (N-linked (GlcNAc...) asparagine). The cysteines at positions 526 and 583 are disulfide-linked. N-linked (GlcNAc...) asparagine glycosylation is present at asparagine 591. Fibronectin type-III domains lie at proline 606–alanine 704, alanine 709–aspartate 806, alanine 811–serine 906, and glutamine 907–proline 1000. Residues serine 693 to glycine 717 are disordered. Asparagine 933 carries an N-linked (GlcNAc...) asparagine glycan. Serine 993 carries the GPI-anchor amidated serine lipid modification. Residues glycine 994–phenylalanine 1018 constitute a propeptide, removed in mature form.

Belongs to the immunoglobulin superfamily. Contactin family. As to quaternary structure, monomer. Interacts with CNTNAP1 in cis form. Binds to the carbonic-anhydrase like domain of PTPRZ1. Interacts with NOTCH1 and TNR. Detected in a complex with NRCAM and PTPRB. Interacts with TASOR. In terms of tissue distribution, strongly expressed in brain and in neuroblastoma and retinoblastoma cell lines. Lower levels of expression in lung, pancreas, kidney and skeletal muscle.

It is found in the cell membrane. Its function is as follows. Contactins mediate cell surface interactions during nervous system development. Involved in the formation of paranodal axo-glial junctions in myelinated peripheral nerves and in the signaling between axons and myelinating glial cells via its association with CNTNAP1. Participates in oligodendrocytes generation by acting as a ligand of NOTCH1. Its association with NOTCH1 promotes NOTCH1 activation through the released notch intracellular domain (NICD) and subsequent translocation to the nucleus. Interaction with TNR induces a repulsion of neurons and an inhibition of neurite outgrowth. This is Contactin-1 (CNTN1) from Homo sapiens (Human).